The chain runs to 216 residues: MASGAPPSVDLTSIQWRMPEWVQSMGGLRTENVLEYFSQSPFYSHKSNNEMLKMQSQFNALDLGDLNSQLKRLTGIQFVIIHERPPFLWVIQKQNRLNENEVKPLTVYFVCNENIYMAPNAYTLLATRMLNATYCFQKALTKIEKFPQYNPQEGYTYPKLSNDNLEVDHSNTNEPADENKNQSIENADYSFSPEDFSVVRAFMQSLHSSKEAPDVK.

The interval 157–187 (YPKLSNDNLEVDHSNTNEPADENKNQSIENA) is disordered.

Belongs to the Mediator complex subunit 6 family. In terms of assembly, component of the Mediator complex.

The protein localises to the nucleus. Component of the Mediator complex, a coactivator involved in the regulated transcription of nearly all RNA polymerase II-dependent genes. Mediator functions as a bridge to convey information from gene-specific regulatory proteins to the basal RNA polymerase II transcription machinery. Mediator is recruited to promoters by direct interactions with regulatory proteins and serves as a scaffold for the assembly of a functional preinitiation complex with RNA polymerase II and the general transcription factors. This chain is Mediator of RNA polymerase II transcription subunit 6 (med6), found in Schizosaccharomyces pombe (strain 972 / ATCC 24843) (Fission yeast).